The following is a 417-amino-acid chain: UDP-N-acetylglucosamine 1-carboxyvinyltransferase (417 aa).

Residue 22–23 (KN) coordinates phosphoenolpyruvate. R93 contributes to the UDP-N-acetyl-alpha-D-glucosamine binding site. Catalysis depends on C117, which acts as the Proton donor. Position 117 is a 2-(S-cysteinyl)pyruvic acid O-phosphothioketal (C117). Residues 122–126 (RPVDQ), D305, and I327 each bind UDP-N-acetyl-alpha-D-glucosamine.

The protein belongs to the EPSP synthase family. MurA subfamily.

It is found in the cytoplasm. The enzyme catalyses phosphoenolpyruvate + UDP-N-acetyl-alpha-D-glucosamine = UDP-N-acetyl-3-O-(1-carboxyvinyl)-alpha-D-glucosamine + phosphate. It participates in cell wall biogenesis; peptidoglycan biosynthesis. Functionally, cell wall formation. Adds enolpyruvyl to UDP-N-acetylglucosamine. The sequence is that of UDP-N-acetylglucosamine 1-carboxyvinyltransferase from Dechloromonas aromatica (strain RCB).